Consider the following 431-residue polypeptide: UDP-N-acetylmuramate--L-alanine ligase (431 aa).

An ATP-binding site is contributed by 108 to 114 (GAHGKST).

This sequence belongs to the MurCDEF family.

The protein localises to the cytoplasm. The catalysed reaction is UDP-N-acetyl-alpha-D-muramate + L-alanine + ATP = UDP-N-acetyl-alpha-D-muramoyl-L-alanine + ADP + phosphate + H(+). Its pathway is cell wall biogenesis; peptidoglycan biosynthesis. Functionally, cell wall formation. The chain is UDP-N-acetylmuramate--L-alanine ligase from Campylobacter jejuni (strain RM1221).